The following is a 207-amino-acid chain: Probable GTP-binding protein EngB (207 aa).

The EngB-type G domain occupies 23–197 (AGIEVVFAGR…ETVIGRWLFA (175 aa)). GTP is bound by residues 31–38 (GRSNAGKS), 58–62 (GRTQL), 76–79 (DLPG), 143–146 (TKAD), and 176–178 (FSS). The Mg(2+) site is built by serine 38 and threonine 60.

It belongs to the TRAFAC class TrmE-Era-EngA-EngB-Septin-like GTPase superfamily. EngB GTPase family. Requires Mg(2+) as cofactor.

Its function is as follows. Necessary for normal cell division and for the maintenance of normal septation. In Methylobacillus flagellatus (strain ATCC 51484 / DSM 6875 / VKM B-1610 / KT), this protein is Probable GTP-binding protein EngB.